We begin with the raw amino-acid sequence, 1010 residues long: 2-oxoglutarate dehydrogenase-like, mitochondrial (1010 aa).

A mitochondrion-targeting transit peptide spans 1 to 107 (MSQLRLLLFR…RASVSSCTKT (107 aa)). The tract at residues 28–47 (GGRRRSSGPPTTIPRSRGGV) is disordered. Residues H130, D143, and D145 each coordinate Ca(2+). Thiamine diphosphate-binding residues include R299, D398, N431, I433, and Q663. 3 residues coordinate Mg(2+): D398, N431, and I433.

It belongs to the alpha-ketoglutarate dehydrogenase family. The OGDHC complex comprises multiple copies of three catalytic enzyme components, the 2-oxoglutarate dehydrogenase (OGDH/E1), the dihydrolipoamide dehydrogenase (DLST/E2) and the dihydrolipoamide dehydrogenase (DLD/E3). OGDHL/E1-like isoenzyme may replace OGDH in the OGDHC complex in the brain. The presence of either ODGH/E1 or ODGHL/E1-like isoenzyme in the complex may depend on its tissular distribution. It depends on thiamine diphosphate as a cofactor. Mg(2+) serves as cofactor. The OGDHL-containing OGDHC complex is present in the brain, but not in the heart.

It localises to the mitochondrion matrix. It catalyses the reaction N(6)-[(R)-lipoyl]-L-lysyl-[protein] + 2-oxoglutarate + H(+) = N(6)-[(R)-S(8)-succinyldihydrolipoyl]-L-lysyl-[protein] + CO2. 2-oxoglutarate dehydrogenase (E1-like) component of the 2-oxoglutarate dehydrogenase multienzyme complex (OGDHC) which mediates the decarboxylation of alpha-ketoglutarate in the tricarboxylic acid cycle. The OGDHC complex catalyzes the overall conversion of 2-oxoglutarate to succinyl-CoA and CO(2) while reducing NAD(+) to NADH. The OGDHC complex is mainly active in the mitochondrion. Involved in the inhibition of cell proliferation and in apoptosis. This is 2-oxoglutarate dehydrogenase-like, mitochondrial from Rattus norvegicus (Rat).